A 313-amino-acid polypeptide reads, in one-letter code: Malate dehydrogenase (313 aa).

Residues 11-16 (GAGNIG) and D35 contribute to the NAD(+) site. Positions 84 and 90 each coordinate substrate. Residues N97 and 120 to 122 (VTN) contribute to the NAD(+) site. Substrate-binding residues include N122 and R153. H177 serves as the catalytic Proton acceptor.

Belongs to the LDH/MDH superfamily. MDH type 3 family.

It carries out the reaction (S)-malate + NAD(+) = oxaloacetate + NADH + H(+). Functionally, catalyzes the reversible oxidation of malate to oxaloacetate. This is Malate dehydrogenase from Ehrlichia canis (strain Jake).